The primary structure comprises 334 residues: Probable peptidoglycan endopeptidase LytE (334 aa).

A signal peptide spans M1–A25. 3 LysM domains span residues Q26–I69, S86–L129, and S149–V192. Disordered stretches follow at residues N70–K89, G131–V153, and T195–S215. 2 stretches are compositionally biased toward low complexity: residues K72–T87 and S132–V153. A NlpC/P60 domain is found at S217–F334. The active-site Nucleophile is C247. The active-site Proton acceptor is H296. H308 is an active-site residue.

Belongs to the peptidase C40 family.

The protein localises to the secreted. It localises to the cell wall. Functionally, cell wall hydrolase that cleaves gamma-D-glutamate-meso-diaminopimelate bonds in peptidoglycan. Seems to play a role in cell separation during vegetative growth. This is Probable peptidoglycan endopeptidase LytE (lytE) from Bacillus subtilis (strain 168).